The sequence spans 349 residues: Peroxidase 7 (349 aa).

The first 22 residues, 1 to 22, serve as a signal peptide directing secretion; it reads MKLAVVSVVVILGVLVAWPVSA. Intrachain disulfides connect C60-C136, C93-C98, C142-C341, and C220-C252. H91 functions as the Proton acceptor in the catalytic mechanism. The Ca(2+) site is built by D92, V95, G97, D99, and S101. P183 is a substrate binding site. H213 serves as a coordination point for heme b. T214 is a Ca(2+) binding site. Residue N231 is glycosylated (N-linked (GlcNAc...) asparagine). The Ca(2+) site is built by D262, T265, and D270.

The protein belongs to the peroxidase family. Classical plant (class III) peroxidase subfamily. Requires heme b as cofactor. Ca(2+) serves as cofactor.

It localises to the secreted. The enzyme catalyses 2 a phenolic donor + H2O2 = 2 a phenolic radical donor + 2 H2O. Its function is as follows. Removal of H(2)O(2), oxidation of toxic reductants, biosynthesis and degradation of lignin, suberization, auxin catabolism, response to environmental stresses such as wounding, pathogen attack and oxidative stress. These functions might be dependent on each isozyme/isoform in each plant tissue. In Arabidopsis thaliana (Mouse-ear cress), this protein is Peroxidase 7 (PER7).